A 99-amino-acid chain; its full sequence is EPIDERMAL PATTERNING FACTOR-like protein 8 (99 aa).

Positions 1–35 are cleaved as a signal peptide; the sequence is MDSSRKYKRCGFGAALFVANIFFSLLSLHCISGAH. Disulfide bonds link Cys-53–Cys-90, Cys-57–Cys-63, and Cys-60–Cys-92.

This sequence belongs to the plant cysteine rich small secretory peptide family. Epidermal patterning factor subfamily.

It is found in the secreted. Functionally, controls stomatal patterning. The chain is EPIDERMAL PATTERNING FACTOR-like protein 8 from Arabidopsis thaliana (Mouse-ear cress).